The primary structure comprises 271 residues: Delta(3,5)-Delta(2,4)-dienoyl-CoA isomerase (271 aa).

Residues 62-66 and Leu-120 each bind substrate; that span reads SGGKF. The Proton donor/acceptor role is filled by Glu-152. The Peroxisome targeting signal (PTS1) signature appears at 269–271; the sequence is HKL.

The protein belongs to the enoyl-CoA hydratase/isomerase family. In terms of assembly, interacts with ECI1.

It localises to the peroxisome. The enzyme catalyses a (3E,5Z)-dienoyl-CoA = a (2E,4E)-(5,6-saturated)-dienoyl-CoA. It participates in lipid metabolism; fatty acid beta-oxidation. Its function is as follows. Peroxisomal di-isomerase that is involved in fatty acid metabolism enzyme by converting 3,5-dienoyl-CoAs to the corresponding 2,4-dienoyl-CoAs. Required for ECI1 to be located to the peroxisome. This chain is Delta(3,5)-Delta(2,4)-dienoyl-CoA isomerase, found in Saccharomyces cerevisiae (strain ATCC 204508 / S288c) (Baker's yeast).